The primary structure comprises 173 residues: Translation initiation factor IF-3 (173 aa).

This sequence belongs to the IF-3 family. Monomer.

Its subcellular location is the cytoplasm. Its function is as follows. IF-3 binds to the 30S ribosomal subunit and shifts the equilibrium between 70S ribosomes and their 50S and 30S subunits in favor of the free subunits, thus enhancing the availability of 30S subunits on which protein synthesis initiation begins. This Campylobacter lari (strain RM2100 / D67 / ATCC BAA-1060) protein is Translation initiation factor IF-3.